A 256-amino-acid chain; its full sequence is Hemin import ATP-binding protein HmuV (256 aa).

The ABC transporter domain maps to 2-238; that stretch reads ISAQNLVYSL…QALTMLYGAD (237 aa). Residue 34-41 participates in ATP binding; sequence GPNGAGKS.

The protein belongs to the ABC transporter superfamily. Heme (hemin) importer (TC 3.A.1.14.5) family. As to quaternary structure, the complex is composed of two ATP-binding proteins (HmuV), two transmembrane proteins (HmuU) and a solute-binding protein (HmuT).

It is found in the cell inner membrane. Functionally, part of the ABC transporter complex HmuTUV involved in hemin import. Responsible for energy coupling to the transport system. This chain is Hemin import ATP-binding protein HmuV, found in Escherichia coli O6:K15:H31 (strain 536 / UPEC).